The primary structure comprises 362 residues: S-adenosylmethionine-dependent nucleotide dehydratase RSAD2 (362 aa).

The segment at 47 to 73 (EQPQVRGEPEDTQETQEDGNSTQPTTP) is disordered. Residues 64-73 (DGNSTQPTTP) show a composition bias toward polar residues. The region spanning 70 to 290 (PTTPVSVNYH…LERHKEVSCL (221 aa)) is the Radical SAM core domain. C84, C88, and C91 together coordinate [4Fe-4S] cluster. K198 carries the post-translational modification N6-acetyllysine. K207 participates in a covalent cross-link: Glycyl lysine isopeptide (Lys-Gly) (interchain with G-Cter in ubiquitin).

It belongs to the radical SAM superfamily. RSAD2 family. In terms of assembly, homodimer. Interacts with IRAK1 and TRAF6. Interacts with FPPS. Interacts with HADHB. Interacts (via C-terminus) with VAPA/VAP33 (via C-terminus). It depends on [4Fe-4S] cluster as a cofactor. In terms of processing, acetylated by HAT1. HAT1-mediated acetylation of Lys-198 in turn recruits UBE4A that stimulates RSAD2 polyubiquitination leading to proteasomal degradation. Post-translationally, 'Lys-6'-linked polyubiquitination at Lys-207 leads to RSAD2 protein degradation. As to expression, expressed at higher levels in atherosclerotic arteries than in normal arteries.

It is found in the endoplasmic reticulum membrane. The protein resides in the golgi apparatus. Its subcellular location is the endoplasmic reticulum. It localises to the lipid droplet. The protein localises to the mitochondrion. It is found in the mitochondrion inner membrane. The protein resides in the mitochondrion outer membrane. The enzyme catalyses CTP + AH2 + S-adenosyl-L-methionine = 3'-deoxy-3',4'-didehydro-CTP + 5'-deoxyadenosine + L-methionine + A + H2O + H(+). IRAK1 and TRAF6 synergistically activate RSAD2 increasing its activity with CTP as substrate about 10-fold. Functionally, interferon-inducible antiviral protein which plays a major role in the cell antiviral state induced by type I and type II interferon. Catalyzes the conversion of cytidine triphosphate (CTP) to 3'-deoxy-3',4'-didehydro-CTP (ddhCTP) via a SAM-dependent radical mechanism. In turn, ddhCTP acts as a chain terminator for the RNA-dependent RNA polymerases from multiple viruses and directly inhibits viral replication. Therefore, inhibits a wide range of DNA and RNA viruses. Also promotes TLR7 and TLR9-dependent production of IFN-beta production in plasmacytoid dendritic cells (pDCs) by facilitating 'Lys-63'-linked ubiquitination of IRAK1 by TRAF6. Plays a role in CD4+ T-cells activation and differentiation. Facilitates T-cell receptor (TCR)-mediated GATA3 activation and optimal T-helper 2 (Th2) cytokine production by modulating NFKB1 and JUNB activities. Can inhibit secretion of soluble proteins. The sequence is that of S-adenosylmethionine-dependent nucleotide dehydratase RSAD2 from Mus musculus (Mouse).